Reading from the N-terminus, the 290-residue chain is Succinate dehydrogenase [ubiquinone] iron-sulfur subunit, mitochondrial (290 aa).

Residues 1-38 (MAAAVVGVSLRRGVPARFLRAGLRPVRGLEAVHGICRG) constitute a mitochondrion transit peptide. Residues 50-143 (KKFSIYRWDP…TTKIYPLPHM (94 aa)) enclose the 2Fe-2S ferredoxin-type domain. [2Fe-2S] cluster is bound by residues C103, C108, C111, and C123. The 4Fe-4S ferredoxin-type domain occupies 186 to 216 (DRQKLDGLYECILCACCSTSCPSYWWNGDKY). 3 residues coordinate [4Fe-4S] cluster: C196, C199, and C202. [3Fe-4S] cluster is bound at residue C206. Residue W211 coordinates a ubiquinone. [3Fe-4S] cluster-binding residues include C253 and C259. C263 is a binding site for [4Fe-4S] cluster.

This sequence belongs to the succinate dehydrogenase/fumarate reductase iron-sulfur protein family. In terms of assembly, component of complex II composed of four subunits: the flavoprotein (FP) SDHA, iron-sulfur protein (IP) SDHB, and a cytochrome b560 composed of SDHC and SDHD. Requires [2Fe-2S] cluster as cofactor. [3Fe-4S] cluster is required as a cofactor. [4Fe-4S] cluster serves as cofactor.

Its subcellular location is the mitochondrion inner membrane. It catalyses the reaction a quinone + succinate = fumarate + a quinol. The enzyme catalyses (R)-malate + a quinone = enol-oxaloacetate + a quinol. It carries out the reaction (S)-malate + a quinone = enol-oxaloacetate + a quinol. It participates in carbohydrate metabolism; tricarboxylic acid cycle; fumarate from succinate (eukaryal route): step 1/1. Enol-oxaloacetate inhibits the succinate dehydrogenase activity. Functionally, iron-sulfur protein (IP) subunit of the succinate dehydrogenase complex (mitochondrial respiratory chain complex II), responsible for transferring electrons from succinate to ubiquinone (coenzyme Q). SDH also oxidizes malate to the non-canonical enol form of oxaloacetate, enol-oxaloacetate. Enol-oxaloacetate, which is a potent inhibitor of the succinate dehydrogenase activity, is further isomerized into keto-oxaloacetate. This Gallus gallus (Chicken) protein is Succinate dehydrogenase [ubiquinone] iron-sulfur subunit, mitochondrial (SDHB).